Here is a 231-residue protein sequence, read N- to C-terminus: uncharacterized protein (231 aa).

Residue 10 to 34 (VVTGAGSGIGEAIATLLHEEGAKVV) coordinates NADP(+). Position 140 (serine 140) interacts with substrate. Catalysis depends on tyrosine 153, which acts as the Proton acceptor.

This sequence belongs to the short-chain dehydrogenases/reductases (SDR) family.

This is an uncharacterized protein from Staphylococcus aureus (strain MW2).